An 827-amino-acid polypeptide reads, in one-letter code: Copper-transporting ATPase 2 (827 aa).

HMA domains follow at residues Val-15–Arg-80 and Ala-82–Arg-148. Residues Cys-26, Cys-29, Cys-93, and Cys-96 each coordinate Cu cation. The next 6 membrane-spanning stretches (helical) occupy residues Val-174–Ile-194, Asn-210–Phe-230, Ser-246–Pro-266, Ser-271–Gly-291, Gly-430–Phe-450, and Phe-458–Ala-478. The 4-aspartylphosphate intermediate role is filled by Asp-515. Asp-714 and Asp-718 together coordinate Mg(2+). 2 helical membrane passes run Asn-771 to Val-793 and Leu-797 to Leu-819.

Belongs to the cation transport ATPase (P-type) (TC 3.A.3) family. Type IB subfamily.

The protein resides in the cell membrane. It carries out the reaction Cu(2+)(in) + ATP + H2O = Cu(2+)(out) + ADP + phosphate + H(+). In terms of biological role, involved in copper transport. The polypeptide is Copper-transporting ATPase 2 (actP2) (Rhizobium meliloti (strain 1021) (Ensifer meliloti)).